The chain runs to 299 residues: Putative glycylpeptide N-tetradecanoyltransferase (299 aa).

The protein belongs to the NMT family.

The catalysed reaction is N-terminal glycyl-[protein] + tetradecanoyl-CoA = N-tetradecanoylglycyl-[protein] + CoA + H(+). Its function is as follows. Adds a myristoyl group to the N-terminal glycine residue of certain proteins. The chain is Putative glycylpeptide N-tetradecanoyltransferase from Amsacta moorei entomopoxvirus (AmEPV).